A 325-amino-acid polypeptide reads, in one-letter code: Ribose-phosphate pyrophosphokinase (325 aa).

ATP-binding positions include 45–47 and 104–105; these read NGE and RQ. Residues histidine 138 and aspartate 178 each contribute to the Mg(2+) site. Residue lysine 202 is part of the active site. D-ribose 5-phosphate is bound by residues arginine 204, aspartate 230, and 234 to 238; that span reads DTGGT.

Belongs to the ribose-phosphate pyrophosphokinase family. Class I subfamily. Homohexamer. It depends on Mg(2+) as a cofactor.

The protein resides in the cytoplasm. The enzyme catalyses D-ribose 5-phosphate + ATP = 5-phospho-alpha-D-ribose 1-diphosphate + AMP + H(+). Its pathway is metabolic intermediate biosynthesis; 5-phospho-alpha-D-ribose 1-diphosphate biosynthesis; 5-phospho-alpha-D-ribose 1-diphosphate from D-ribose 5-phosphate (route I): step 1/1. Involved in the biosynthesis of the central metabolite phospho-alpha-D-ribosyl-1-pyrophosphate (PRPP) via the transfer of pyrophosphoryl group from ATP to 1-hydroxyl of ribose-5-phosphate (Rib-5-P). In Corynebacterium efficiens (strain DSM 44549 / YS-314 / AJ 12310 / JCM 11189 / NBRC 100395), this protein is Ribose-phosphate pyrophosphokinase.